The sequence spans 108 residues: Large ribosomal subunit protein bL21 (108 aa).

Belongs to the bacterial ribosomal protein bL21 family. In terms of assembly, part of the 50S ribosomal subunit. Contacts protein L20.

In terms of biological role, this protein binds to 23S rRNA in the presence of protein L20. This chain is Large ribosomal subunit protein bL21, found in Buchnera aphidicola subsp. Acyrthosiphon pisum (strain 5A).